We begin with the raw amino-acid sequence, 419 residues long: Pregnancy-specific beta-1-glycoprotein 1 (419 aa).

An N-terminal signal peptide occupies residues 1–34 (MGTLSAPPCTQRIKWKGLLLTASLLNFWNLPTTA). One can recognise an Ig-like V-type domain in the interval 35–144 (QVTIEAEPTK…TGRFTFTLHL (110 aa)). Asn-61, Asn-104, Asn-111, Asn-199, Asn-259, Asn-268, and Asn-303 each carry an N-linked (GlcNAc...) asparagine glycan. Ig-like C2-type domains follow at residues 149 to 234 (PSIS…VTLN), 240 to 327 (PKPY…VTLN), and 335 to 410 (PRIY…KSMT). Residues Cys-169 and Cys-217 are joined by a disulfide bond. Cystine bridges form between Cys-262/Cys-310 and Cys-354/Cys-394.

The protein belongs to the immunoglobulin superfamily. CEA family.

It is found in the secreted. In Homo sapiens (Human), this protein is Pregnancy-specific beta-1-glycoprotein 1 (PSG1).